Reading from the N-terminus, the 231-residue chain is Orotidine 5'-phosphate decarboxylase (231 aa).

Substrate contacts are provided by residues D9, K34, 62–71 (DLKLHDIPSV), T117, R179, Q188, G208, and R209. Residue K64 is the Proton donor of the active site.

The protein belongs to the OMP decarboxylase family. Type 1 subfamily. As to quaternary structure, homodimer.

The enzyme catalyses orotidine 5'-phosphate + H(+) = UMP + CO2. The protein operates within pyrimidine metabolism; UMP biosynthesis via de novo pathway; UMP from orotate: step 2/2. In terms of biological role, catalyzes the decarboxylation of orotidine 5'-monophosphate (OMP) to uridine 5'-monophosphate (UMP). The polypeptide is Orotidine 5'-phosphate decarboxylase (Aquifex aeolicus (strain VF5)).